Consider the following 137-residue polypeptide: Small ribosomal subunit protein uS9 (137 aa).

The protein belongs to the universal ribosomal protein uS9 family.

The chain is Small ribosomal subunit protein uS9 (rps9) from Sulfurisphaera tokodaii (strain DSM 16993 / JCM 10545 / NBRC 100140 / 7) (Sulfolobus tokodaii).